Here is a 373-residue protein sequence, read N- to C-terminus: tRNA (guanine(26)-N(2))-dimethyltransferase (373 aa).

One can recognise a Trm1 methyltransferase domain in the interval 2 to 365 (KIISEGETKL…AELSDLVVLI (364 aa)). 5 residues coordinate S-adenosyl-L-methionine: R35, R66, D86, D113, and A114.

It belongs to the class I-like SAM-binding methyltransferase superfamily. Trm1 family.

It carries out the reaction guanosine(26) in tRNA + 2 S-adenosyl-L-methionine = N(2)-dimethylguanosine(26) in tRNA + 2 S-adenosyl-L-homocysteine + 2 H(+). Dimethylates a single guanine residue at position 26 of a number of tRNAs using S-adenosyl-L-methionine as donor of the methyl groups. The polypeptide is tRNA (guanine(26)-N(2))-dimethyltransferase (Methanococcus maripaludis (Methanococcus deltae)).